Consider the following 441-residue polypeptide: MITSPVFSGQFYAVLGLARSGMATVAALLASDAKVMAWDNNPETRDRLQQQYQEAIDKGRLVISDPMIADIFGISAFVVSPGIPINRHPIAALAKERGIPIIGDIELFAQAHGFWERHGRRCPVVGITGTNGKSTTTALIHHILKEAGLPTLMGGNIGLPLLAADPLPDGGVYVLELSSYQIDLTFTLDCDIAVLTNITPDHLDRHGGFEGYRKAKERLFLLQSSPHYAVIATDDIPSQVIAKQSAAHLVTVHADNISAEDQVNWPNLQGPHNAQNAVLAMAVAHILGISDDVISKALISYAGLPHRMQKIGERRGVLFIDDSKATNAMATAPALAAFPAIHWILGGVPKTADLDPCKAFYNHIRQAYTIGQAGPDYAQLLREAGVNVVECGTLEKAVRLAAEEAQPDEVVMLTPACASFDQFSDYEARGQAFKKIVEALD.

An ATP-binding site is contributed by 129–135 (GTNGKST).

This sequence belongs to the MurCDEF family.

It localises to the cytoplasm. The catalysed reaction is UDP-N-acetyl-alpha-D-muramoyl-L-alanine + D-glutamate + ATP = UDP-N-acetyl-alpha-D-muramoyl-L-alanyl-D-glutamate + ADP + phosphate + H(+). Its pathway is cell wall biogenesis; peptidoglycan biosynthesis. Cell wall formation. Catalyzes the addition of glutamate to the nucleotide precursor UDP-N-acetylmuramoyl-L-alanine (UMA). This Zymomonas mobilis subsp. mobilis (strain ATCC 31821 / ZM4 / CP4) protein is UDP-N-acetylmuramoylalanine--D-glutamate ligase.